An 84-amino-acid chain; its full sequence is Cell division topological specificity factor (84 aa).

Belongs to the MinE family.

In terms of biological role, prevents the cell division inhibition by proteins MinC and MinD at internal division sites while permitting inhibition at polar sites. This ensures cell division at the proper site by restricting the formation of a division septum at the midpoint of the long axis of the cell. The sequence is that of Cell division topological specificity factor from Burkholderia ambifaria (strain MC40-6).